The following is a 305-amino-acid chain: Glycine--tRNA ligase alpha subunit (305 aa).

The protein belongs to the class-II aminoacyl-tRNA synthetase family. Tetramer of two alpha and two beta subunits.

It localises to the cytoplasm. The enzyme catalyses tRNA(Gly) + glycine + ATP = glycyl-tRNA(Gly) + AMP + diphosphate. In Heliobacterium modesticaldum (strain ATCC 51547 / Ice1), this protein is Glycine--tRNA ligase alpha subunit.